The chain runs to 463 residues: NADH dehydrogenase [ubiquinone] iron-sulfur protein 2, mitochondrial (463 aa).

The transit peptide at 1-33 (MAALRALCRLRGAAAQVLRPGAGVRLPIQPSRG) directs the protein to the mitochondrion. Lysine 62 is subject to N6-acetyllysine. Symmetric dimethylarginine is present on arginine 118. 3 residues coordinate [4Fe-4S] cluster: cysteine 326, cysteine 332, and cysteine 347.

Belongs to the complex I 49 kDa subunit family. In terms of assembly, core subunit of respiratory chain NADH dehydrogenase (Complex I) which is composed of 45 different subunits. Component of the iron-sulfur (IP) fragment of the enzyme. Interacts with NDUFAF3. Interacts with NDUFAF7. Interacts with CERS2. The cofactor is [4Fe-4S] cluster. Dimethylation at Arg-118 by NDUFAF7 takes place after NDUFS2 assembles into the complex I, leading to stabilize the early intermediate complex.

It is found in the mitochondrion inner membrane. It carries out the reaction a ubiquinone + NADH + 5 H(+)(in) = a ubiquinol + NAD(+) + 4 H(+)(out). In terms of biological role, core subunit of the mitochondrial membrane respiratory chain NADH dehydrogenase (Complex I) which catalyzes electron transfer from NADH through the respiratory chain, using ubiquinone as an electron acceptor. Essential for the catalytic activity and assembly of complex I. Redox-sensitive, critical component of the oxygen-sensing pathway in the pulmonary vasculature which plays a key role in acute pulmonary oxygen-sensing and hypoxic pulmonary vasoconstriction. Plays an important role in carotid body sensing of hypoxia. Essential for glia-like neural stem and progenitor cell proliferation, differentiation and subsequent oligodendrocyte or neuronal maturation. This Bos taurus (Bovine) protein is NADH dehydrogenase [ubiquinone] iron-sulfur protein 2, mitochondrial (NDUFS2).